Reading from the N-terminus, the 77-residue chain is Putative defensin-like protein 60 (77 aa).

The first 25 residues, 1–25, serve as a signal peptide directing secretion; the sequence is MKMNITKSYVILFLVVVMTNSLSNS. Disulfide bonds link cysteine 41–cysteine 75, cysteine 45–cysteine 68, cysteine 54–cysteine 73, and cysteine 58–cysteine 74.

It belongs to the DEFL family.

Its subcellular location is the secreted. This chain is Putative defensin-like protein 60, found in Arabidopsis thaliana (Mouse-ear cress).